Consider the following 306-residue polypeptide: MKFVSIISNSRMLFLFLLITAKSDRESCLYIFDENIRGVNITPTFVSTRAKGLFDLFIKKLRSRVALSFFLLKRKIKLEETIVYGADHLSHSLLFLKKCSFFLIEDGTENYHQKSYKRSWKNKLFSIPKFGMYKNVKRIYLTKRENVPDCIKSKVEYINIKDLWFKKTEEEKLEILYLLGIDMKKIQLLIGEPFILFTQPLSEDYILTENEKIELYKSIIDKYDASKLVIKPHPREKTDYSRIFPNVKVFDETYPSEVLDILEVKFSRVITLFSTAAFSYPKEKVDFYGTKIHPKLLAKFGNIEYE.

This is an uncharacterized protein from Haemophilus influenzae (strain ATCC 51907 / DSM 11121 / KW20 / Rd).